The following is a 396-amino-acid chain: Dihydrolipoyllysine-residue acetyltransferase component of pyruvate dehydrogenase complex (396 aa).

Positions 1-69 (MPDIGLEEVE…KTDALIMRCE (69 aa)) constitute a Lipoyl-binding domain. K35 is modified (N6-lipoyllysine). Residues 104–141 (HATPLIRRLARNLNINLYDVVGTGPKNRILKEDLDLYQ) form the Peripheral subunit-binding (PSBD) domain. Residue H369 is part of the active site.

This sequence belongs to the 2-oxoacid dehydrogenase family. Forms a 24-polypeptide structural core with octahedral symmetry. (R)-lipoate serves as cofactor.

It catalyses the reaction N(6)-[(R)-dihydrolipoyl]-L-lysyl-[protein] + acetyl-CoA = N(6)-[(R)-S(8)-acetyldihydrolipoyl]-L-lysyl-[protein] + CoA. Functionally, the pyruvate dehydrogenase complex catalyzes the overall conversion of pyruvate to acetyl-CoA and CO(2). It contains multiple copies of three enzymatic components: pyruvate dehydrogenase (E1), dihydrolipoamide acetyltransferase (E2) and lipoamide dehydrogenase (E3). In Buchnera aphidicola subsp. Acyrthosiphon pisum (strain APS) (Acyrthosiphon pisum symbiotic bacterium), this protein is Dihydrolipoyllysine-residue acetyltransferase component of pyruvate dehydrogenase complex (aceF).